We begin with the raw amino-acid sequence, 604 residues long: uncharacterized protein (604 aa).

A disordered region spans residues Glu239–Asn259.

This is an uncharacterized protein from Escherichia coli (strain K12).